We begin with the raw amino-acid sequence, 555 residues long: Serine/threonine-protein kinase Nek4 (555 aa).

The 255-residue stretch at 4–258 folds into the Protein kinase domain; that stretch reads YEVLEQIGKG…ANELLNHPHL (255 aa). ATP contacts are provided by residues 10 to 18 and lysine 33; that span reads IGKGSFGSA. Aspartate 129 serves as the catalytic Proton acceptor. Disordered regions lie at residues 288–328, 346–372, and 443–477; these read LKER…MFNG, QRQE…KAST, and NRET…ITKD. Positions 304–320 are enriched in polar residues; that stretch reads PSVSDTEAGSVSSSGKA.

Belongs to the protein kinase superfamily. NEK Ser/Thr protein kinase family. NIMA subfamily.

The enzyme catalyses L-seryl-[protein] + ATP = O-phospho-L-seryl-[protein] + ADP + H(+). It catalyses the reaction L-threonyl-[protein] + ATP = O-phospho-L-threonyl-[protein] + ADP + H(+). In terms of biological role, may be involved in plant development processes. This is Serine/threonine-protein kinase Nek4 (NEK4) from Arabidopsis thaliana (Mouse-ear cress).